The chain runs to 230 residues: Ribose-5-phosphate isomerase A (230 aa).

Residues 29–32, 85–88, and 98–101 contribute to the substrate site; these read TGST, DGAD, and KGGG. The Proton acceptor role is filled by glutamate 107. Lysine 125 is a substrate binding site.

Belongs to the ribose 5-phosphate isomerase family. As to quaternary structure, homodimer.

The enzyme catalyses aldehydo-D-ribose 5-phosphate = D-ribulose 5-phosphate. It functions in the pathway carbohydrate degradation; pentose phosphate pathway; D-ribose 5-phosphate from D-ribulose 5-phosphate (non-oxidative stage): step 1/1. Its function is as follows. Catalyzes the reversible conversion of ribose-5-phosphate to ribulose 5-phosphate. The sequence is that of Ribose-5-phosphate isomerase A from Staphylococcus epidermidis (strain ATCC 35984 / DSM 28319 / BCRC 17069 / CCUG 31568 / BM 3577 / RP62A).